Reading from the N-terminus, the 195-residue chain is Interferon tau-5 (195 aa).

The N-terminal stretch at 1–23 is a signal peptide; the sequence is MAFVLSLLMALVLVSYGPGGSLG. Disulfide bonds link C24/C122 and C52/C162.

It belongs to the alpha/beta interferon family. IFN-alphaII subfamily. Constitutively and exclusively expressed in the mononuclear cells of the extraembryonic trophectoderm.

It is found in the secreted. Functionally, paracrine hormone primarily responsible for maternal recognition of pregnancy. Interacts with endometrial receptors, probably type I interferon receptors, and blocks estrogen receptor expression, preventing the estrogen-induced increase in oxytocin receptor expression in the endometrium. This results in the suppression of the pulsatile endometrial release of the luteolytic hormone prostaglandin F2-alpha, hindering the regression of the corpus luteum (luteolysis) and therefore a return to ovarian cyclicity. This, and a possible direct effect of IFN-tau on prostaglandin synthesis, leads in turn to continued ovarian progesterone secretion, which stimulates the secretion by the endometrium of the nutrients required for the growth of the conceptus. In summary, displays particularly high antiviral and antiproliferative potency concurrently with particular weak cytotoxicity, high antiluteolytic activity and immunomodulatory properties. In contrast with other IFNs, IFN-tau is not virally inducible. This is Interferon tau-5 (IFNT5) from Ovis aries (Sheep).